The following is a 291-amino-acid chain: Bifunctional protein FolD (291 aa).

NADP(+)-binding positions include 168–170, T195, and V236; that span reads GRG.

This sequence belongs to the tetrahydrofolate dehydrogenase/cyclohydrolase family. In terms of assembly, homodimer.

It carries out the reaction (6R)-5,10-methylene-5,6,7,8-tetrahydrofolate + NADP(+) = (6R)-5,10-methenyltetrahydrofolate + NADPH. The catalysed reaction is (6R)-5,10-methenyltetrahydrofolate + H2O = (6R)-10-formyltetrahydrofolate + H(+). It participates in one-carbon metabolism; tetrahydrofolate interconversion. Catalyzes the oxidation of 5,10-methylenetetrahydrofolate to 5,10-methenyltetrahydrofolate and then the hydrolysis of 5,10-methenyltetrahydrofolate to 10-formyltetrahydrofolate. This Bifidobacterium adolescentis (strain ATCC 15703 / DSM 20083 / NCTC 11814 / E194a) protein is Bifunctional protein FolD.